The following is a 199-amino-acid chain: Recombination protein RecR (199 aa).

Residues 56–71 (CQVCFHLSAESTCEIC) form a C4-type zinc finger. Residues 79–173 (QTLCVVADSR…KVTRIAFGLP (95 aa)) enclose the Toprim domain.

It belongs to the RecR family.

Its function is as follows. May play a role in DNA repair. It seems to be involved in an RecBC-independent recombinational process of DNA repair. It may act with RecF and RecO. In Gloeothece citriformis (strain PCC 7424) (Cyanothece sp. (strain PCC 7424)), this protein is Recombination protein RecR.